A 391-amino-acid polypeptide reads, in one-letter code: Polyketide synthase 3 (391 aa).

Cysteine 164 is a catalytic residue.

This sequence belongs to the thiolase-like superfamily. Chalcone/stilbene synthases family. Homodimer.

It carries out the reaction (E)-4-coumaroyl-CoA + 3 malonyl-CoA + 3 H(+) = 2',4,4',6'-tetrahydroxychalcone + 3 CO2 + 4 CoA. The protein operates within secondary metabolite biosynthesis; flavonoid biosynthesis. In terms of biological role, polyketide synthase producing p-coumaryltriacetic acid lactone (CTAL) and slightly naringenin chalcone. Can use p-coumaryl-CoA as substrate. In Rubus idaeus (Raspberry), this protein is Polyketide synthase 3 (PKS3).